We begin with the raw amino-acid sequence, 411 residues long: Putative competence-damage inducible protein (411 aa).

Belongs to the CinA family.

This Caldicellulosiruptor bescii (strain ATCC BAA-1888 / DSM 6725 / KCTC 15123 / Z-1320) (Anaerocellum thermophilum) protein is Putative competence-damage inducible protein.